A 762-amino-acid polypeptide reads, in one-letter code: Phosphoribosylformylglycinamidine synthase subunit PurL (762 aa).

Histidine 58 is a catalytic residue. Positions 61 and 105 each coordinate ATP. Glutamate 107 serves as a coordination point for Mg(2+). Substrate contacts are provided by residues 108-111 (SHNH) and arginine 130. Histidine 109 acts as the Proton acceptor in catalysis. Aspartate 131 provides a ligand contact to Mg(2+). Glutamine 255 is a substrate binding site. Position 283 (aspartate 283) interacts with Mg(2+). Residue 327–329 (ESQ) participates in substrate binding. Residues asparagine 513 and glycine 550 each contribute to the ATP site. Asparagine 551 contributes to the Mg(2+) binding site. Serine 553 lines the substrate pocket.

Belongs to the FGAMS family. As to quaternary structure, monomer. Part of the FGAM synthase complex composed of 1 PurL, 1 PurQ and 2 PurS subunits.

It is found in the cytoplasm. It catalyses the reaction N(2)-formyl-N(1)-(5-phospho-beta-D-ribosyl)glycinamide + L-glutamine + ATP + H2O = 2-formamido-N(1)-(5-O-phospho-beta-D-ribosyl)acetamidine + L-glutamate + ADP + phosphate + H(+). It participates in purine metabolism; IMP biosynthesis via de novo pathway; 5-amino-1-(5-phospho-D-ribosyl)imidazole from N(2)-formyl-N(1)-(5-phospho-D-ribosyl)glycinamide: step 1/2. Part of the phosphoribosylformylglycinamidine synthase complex involved in the purines biosynthetic pathway. Catalyzes the ATP-dependent conversion of formylglycinamide ribonucleotide (FGAR) and glutamine to yield formylglycinamidine ribonucleotide (FGAM) and glutamate. The FGAM synthase complex is composed of three subunits. PurQ produces an ammonia molecule by converting glutamine to glutamate. PurL transfers the ammonia molecule to FGAR to form FGAM in an ATP-dependent manner. PurS interacts with PurQ and PurL and is thought to assist in the transfer of the ammonia molecule from PurQ to PurL. In Corynebacterium glutamicum (strain ATCC 13032 / DSM 20300 / JCM 1318 / BCRC 11384 / CCUG 27702 / LMG 3730 / NBRC 12168 / NCIMB 10025 / NRRL B-2784 / 534), this protein is Phosphoribosylformylglycinamidine synthase subunit PurL.